Consider the following 204-residue polypeptide: Ribonuclease HII (204 aa).

The RNase H type-2 domain maps to 1–197 (MTLGIDEAGR…KNRILNPKLL (197 aa)). 3 residues coordinate a divalent metal cation: Asp-6, Glu-7, and Asp-103.

This sequence belongs to the RNase HII family. The cofactor is Mn(2+). Mg(2+) serves as cofactor.

It is found in the cytoplasm. It carries out the reaction Endonucleolytic cleavage to 5'-phosphomonoester.. Functionally, endonuclease that specifically degrades the RNA of RNA-DNA hybrids. This chain is Ribonuclease HII, found in Helicobacter pylori (strain HPAG1).